The sequence spans 440 residues: Heat stress transcription factor A-4b (440 aa).

Residues 121–181 (NERKDYEEEI…QRSLISYVRE (61 aa)) are a coiled coil. The tract at residues 133–183 (LKSDNAALSSELQNNTLKKLNMEKRMQALEEKLFVVEDQQRSLISYVREIV) is hydrophobic repeat HR-A/B. The Nuclear export signal motif lies at 158-163 (MQALEE). Residues 200-204 (RKKRR) carry the Nuclear localization signal motif. Residues 264 to 417 (DISYDDGVPG…EMKSGDRQHL (154 aa)) are disordered. The segment covering 295-305 (SPPTRMRTSSA) has biased composition (polar residues). The span at 333-343 (SRVDTRAKVSE) shows a compositional bias: basic and acidic residues. The short motif at 375–384 (DGFWQQFLTE) is the AHA element. Positions 380 to 390 (QFLTEQPGSSD) are enriched in polar residues. Over residues 391 to 417 (AHQEAQSERRDGGNKVDEMKSGDRQHL) the composition is skewed to basic and acidic residues.

This sequence belongs to the HSF family. Class A subfamily. As to quaternary structure, homotrimer. Exhibits temperature-dependent phosphorylation.

It is found in the cytoplasm. The protein resides in the nucleus. Functionally, transcriptional regulator that specifically binds DNA of heat shock promoter elements (HSE). The chain is Heat stress transcription factor A-4b (HSFA4B) from Oryza sativa subsp. japonica (Rice).